A 553-amino-acid chain; its full sequence is Putative transport protein YidE (553 aa).

A run of 5 helical transmembrane segments spans residues Ile4–Val24, Gly28–Ser48, Phe65–Ser85, Leu95–Phe115, and Met158–Leu178. 2 consecutive RCK C-terminal domains span residues Gln191 to Gln276 and Asp279 to Asn361. 6 helical membrane-spanning segments follow: residues Met371–Val391, Gly393–Leu413, Ile439–Val459, Leu464–Leu484, Tyr493–Ala513, and Leu533–Gly553.

This sequence belongs to the AAE transporter (TC 2.A.81) family. YidE subfamily.

It is found in the cell membrane. This is Putative transport protein YidE from Escherichia coli O127:H6 (strain E2348/69 / EPEC).